Here is a 341-residue protein sequence, read N- to C-terminus: Phenylalanine--tRNA ligase alpha subunit (341 aa).

Glu254 contributes to the Mg(2+) binding site.

It belongs to the class-II aminoacyl-tRNA synthetase family. Phe-tRNA synthetase alpha subunit type 1 subfamily. Tetramer of two alpha and two beta subunits. Mg(2+) serves as cofactor.

It is found in the cytoplasm. It carries out the reaction tRNA(Phe) + L-phenylalanine + ATP = L-phenylalanyl-tRNA(Phe) + AMP + diphosphate + H(+). This chain is Phenylalanine--tRNA ligase alpha subunit, found in Chlorobaculum tepidum (strain ATCC 49652 / DSM 12025 / NBRC 103806 / TLS) (Chlorobium tepidum).